We begin with the raw amino-acid sequence, 724 residues long: NAD(+) hydrolase SARM1 (724 aa).

The N-terminal 27 residues, 1–27 (MVLTLLFSAYKLCRFFIMSGPRPGADR), are a transit peptide targeting the mitochondrion. An ARM 1 repeat occupies 60 to 100 (EVQGALERSLPELQQALSELKQASAAQAVGAGLAEVFQLVE). NAD(+) is bound by residues W103, R110, 149-157 (EQILVAENR), and 190-193 (HMFK). 7 ARM repeats span residues 114 to 153 (QGLCDAIRLDGGLDLLLRLLQAPELETRVQAARLLEQILV), 155 to 193 (ENRDRVARIGLGVILNLSKEREPVELARSVAGILEHMFK), 196 to 235 (EETCQRLVAAGGLDAVLYWCRRTDPALLRHCALALANCAL), 237 to 280 (GGQT…LATN), 281 to 314 (KEVEREVEHSGTLALVEPLVASLDPGRFARCLVD), 315 to 354 (ASDTSQGRGPDDLQSLVLLLDSSRLEAQCIGAFYLCAEAA), and 359 to 402 (QGKT…EEVP). 2 consecutive SAM domains span residues 412–476 (WKEA…LKTF) and 486–548 (NLAD…MLHS). S548 and S558 each carry phosphoserine. In terms of domain architecture, TIR spans 560–703 (DTPDVFISYR…KIIRFLQGRP (144 aa)). Residues 569–570 (RR) and E599 contribute to the NAD(+) site. E642 is a catalytic residue. A compositionally biased stretch (polar residues) spans 703 to 717 (PSQDSSAGSDTSLEG). A disordered region spans residues 703-724 (PSQDSSAGSDTSLEGATSMGLP).

The protein belongs to the SARM1 family. In terms of assembly, homooctamer; forms an octameric ring via SAM domains. Interacts with TICAM1/TRIF and thereby interferes with TICAM1/TRIF function. Interacts with MAPK10/JNK3 and SDC2 (via cytoplasmic domain). Post-translationally, phosphorylation at Ser-548 by JNK kinases (MAPK8, MAPK9 and /or MAPK10) enhance the NAD(+) hydrolase (NADase) activity. Phosphorylation at Ser-548 and subsequent activation takes place in response to oxidative stress conditions and inhibits mitochondrial respiration. Phosphorylation at Ser-548 increases in response to cerebral ischemia/reperfusion (I/R) injury.

It localises to the cytoplasm. It is found in the cell projection. Its subcellular location is the axon. The protein resides in the dendrite. The protein localises to the synapse. It localises to the mitochondrion. The enzyme catalyses NAD(+) + H2O = ADP-D-ribose + nicotinamide + H(+). The catalysed reaction is NAD(+) = cyclic ADP-beta-D-ribose + nicotinamide + H(+). It carries out the reaction NADP(+) + H2O = ADP-D-ribose 2'-phosphate + nicotinamide + H(+). Autoinhibited: in the inactive state, the enzymatic TIR domain is held apart by the autoinhibiting ARM repeats. NAD(+)-binding to ARM repeats maintains an inactive state by promoting interaction between ARM repeats and the TIR domain, thereby facilitating inhibition of the enzymatic TIR domain. Following activation, possibly by nicotinamide mononucleotide (NMN), auto-inhibitory interactions are released, allowing self-association of the TIR domains and subsequent activation of the NAD(+) hydrolase (NADase) activity. Self-association of TIR domains is facilitated by the octamer of SAM domains. Functionally, NAD(+) hydrolase, which plays a key role in axonal degeneration following injury by regulating NAD(+) metabolism. Acts as a negative regulator of MYD88- and TRIF-dependent toll-like receptor signaling pathway by promoting Wallerian degeneration, an injury-induced form of programmed subcellular death which involves degeneration of an axon distal to the injury site. Wallerian degeneration is triggered by NAD(+) depletion: in response to injury, SARM1 is activated and catalyzes cleavage of NAD(+) into ADP-D-ribose (ADPR), cyclic ADPR (cADPR) and nicotinamide; NAD(+) cleavage promoting cytoskeletal degradation and axon destruction. Also able to hydrolyze NADP(+), but not other NAD(+)-related molecules. Can activate neuronal cell death in response to stress. Regulates dendritic arborization through the MAPK4-JNK pathway. Involved in innate immune response: inhibits both TICAM1/TRIF- and MYD88-dependent activation of JUN/AP-1, TRIF-dependent activation of NF-kappa-B and IRF3, and the phosphorylation of MAPK14/p38. The sequence is that of NAD(+) hydrolase SARM1 from Rattus norvegicus (Rat).